A 709-amino-acid chain; its full sequence is Molybdenum cofactor sulfurase (709 aa).

Lys208 carries the N6-(pyridoxal phosphate)lysine modification. Cys367 is an active-site residue. The MOSC domain maps to 563 to 707 (DNALDRQNCR…LESGMSVNFS (145 aa)).

It belongs to the class-V pyridoxal-phosphate-dependent aminotransferase family. MOCOS subfamily. Pyridoxal 5'-phosphate serves as cofactor.

It catalyses the reaction Mo-molybdopterin + L-cysteine + AH2 = thio-Mo-molybdopterin + L-alanine + A + H2O. Its pathway is cofactor biosynthesis; molybdopterin biosynthesis. Functionally, sulfurates the molybdenum cofactor. Sulfation of molybdenum is essential for xanthine dehydrogenase (XDH) and aldehyde oxidase (ADO) enzymes in which molybdenum cofactor is liganded by 1 oxygen and 1 sulfur atom in active form. In Caenorhabditis elegans, this protein is Molybdenum cofactor sulfurase.